The following is a 154-amino-acid chain: Myoglobin (154 aa).

The region spanning 2-148 (VLSDAEWHLV…FRKDIAAKYK (147 aa)) is the Globin domain. Ser-4 is modified (phosphoserine). His-65 contacts nitrite. His-65 is an O2 binding site. The residue at position 68 (Thr-68) is a Phosphothreonine. Heme b is bound at residue His-94.

Belongs to the globin family. In terms of assembly, monomeric.

The protein localises to the cytoplasm. It localises to the sarcoplasm. The enzyme catalyses Fe(III)-heme b-[protein] + nitric oxide + H2O = Fe(II)-heme b-[protein] + nitrite + 2 H(+). It catalyses the reaction H2O2 + AH2 = A + 2 H2O. Its function is as follows. Monomeric heme protein which primary function is to store oxygen and facilitate its diffusion within muscle tissues. Reversibly binds oxygen through a pentacoordinated heme iron and enables its timely and efficient release as needed during periods of heightened demand. Depending on the oxidative conditions of tissues and cells, and in addition to its ability to bind oxygen, it also has a nitrite reductase activity whereby it regulates the production of bioactive nitric oxide. Under stress conditions, like hypoxia and anoxia, it also protects cells against reactive oxygen species thanks to its pseudoperoxidase activity. This chain is Myoglobin (MB), found in Balaenoptera acutorostrata (Common minke whale).